The sequence spans 284 residues: Bifunctional protein FolD (284 aa).

NADP(+) is bound by residues 166–168 (GAS) and Ile-232.

This sequence belongs to the tetrahydrofolate dehydrogenase/cyclohydrolase family. As to quaternary structure, homodimer.

The enzyme catalyses (6R)-5,10-methylene-5,6,7,8-tetrahydrofolate + NADP(+) = (6R)-5,10-methenyltetrahydrofolate + NADPH. It catalyses the reaction (6R)-5,10-methenyltetrahydrofolate + H2O = (6R)-10-formyltetrahydrofolate + H(+). The protein operates within one-carbon metabolism; tetrahydrofolate interconversion. Functionally, catalyzes the oxidation of 5,10-methylenetetrahydrofolate to 5,10-methenyltetrahydrofolate and then the hydrolysis of 5,10-methenyltetrahydrofolate to 10-formyltetrahydrofolate. The protein is Bifunctional protein FolD of Shewanella baltica (strain OS223).